Consider the following 68-residue polypeptide: Conotoxin Vx2 (68 aa).

The signal sequence occupies residues 1–20 (MMSKLGVLVTICLLLFPLTA). Residues 21-47 (LPLDGDQPADHPAKRTQDHNLASPISA) constitute a propeptide that is removed on maturation. 3 disulfide bridges follow: Cys55/Cys68, Cys56/Cys61, and Cys57/Cys65.

It belongs to the conotoxin M superfamily. As to expression, expressed by the venom duct.

The protein localises to the secreted. Its function is as follows. In vivo, elicits a series of symptoms, such as being sedative, tail stiffening and twisted jumping, when injected intracranially into mice. This is Conotoxin Vx2 from Conus vexillum (Flag cone).